We begin with the raw amino-acid sequence, 485 residues long: UDP-N-acetylmuramate--L-alanine ligase (485 aa).

An ATP-binding site is contributed by Gly-120–Thr-126.

Belongs to the MurCDEF family.

The protein localises to the cytoplasm. It catalyses the reaction UDP-N-acetyl-alpha-D-muramate + L-alanine + ATP = UDP-N-acetyl-alpha-D-muramoyl-L-alanine + ADP + phosphate + H(+). It participates in cell wall biogenesis; peptidoglycan biosynthesis. Functionally, cell wall formation. The polypeptide is UDP-N-acetylmuramate--L-alanine ligase (Rickettsia conorii (strain ATCC VR-613 / Malish 7)).